The following is a 215-amino-acid chain: Large ribosomal subunit protein uL4 (215 aa).

The segment at 46 to 72 (TAKSKNRAEVSGGGRKPWAQKGGGRAR) is disordered. Residues 56–71 (SGGGRKPWAQKGGGRA) show a composition bias toward gly residues.

This sequence belongs to the universal ribosomal protein uL4 family. In terms of assembly, part of the 50S ribosomal subunit.

One of the primary rRNA binding proteins, this protein initially binds near the 5'-end of the 23S rRNA. It is important during the early stages of 50S assembly. It makes multiple contacts with different domains of the 23S rRNA in the assembled 50S subunit and ribosome. In terms of biological role, forms part of the polypeptide exit tunnel. The sequence is that of Large ribosomal subunit protein uL4 from Helicobacter pylori (strain J99 / ATCC 700824) (Campylobacter pylori J99).